The chain runs to 323 residues: tRNA dimethylallyltransferase (323 aa).

12–19 is a binding site for ATP; sequence GPTAAGKT. Position 14–19 (14–19) interacts with substrate; that stretch reads TAAGKT. Interaction with substrate tRNA stretches follow at residues 37-40 and 161-165; these read DSAL and QRLMR.

The protein belongs to the IPP transferase family. In terms of assembly, monomer. The cofactor is Mg(2+).

The catalysed reaction is adenosine(37) in tRNA + dimethylallyl diphosphate = N(6)-dimethylallyladenosine(37) in tRNA + diphosphate. Functionally, catalyzes the transfer of a dimethylallyl group onto the adenine at position 37 in tRNAs that read codons beginning with uridine, leading to the formation of N6-(dimethylallyl)adenosine (i(6)A). This Pseudomonas aeruginosa (strain LESB58) protein is tRNA dimethylallyltransferase.